A 145-amino-acid chain; its full sequence is Large ribosomal subunit protein bL19 (145 aa).

Belongs to the bacterial ribosomal protein bL19 family.

In terms of biological role, this protein is located at the 30S-50S ribosomal subunit interface and may play a role in the structure and function of the aminoacyl-tRNA binding site. The protein is Large ribosomal subunit protein bL19 of Brachyspira hyodysenteriae (strain ATCC 49526 / WA1).